A 463-amino-acid polypeptide reads, in one-letter code: L-seryl-tRNA(Sec) selenium transferase (463 aa).

Lysine 295 carries the post-translational modification N6-(pyridoxal phosphate)lysine.

Belongs to the SelA family. Homodecamer; pentamer of dimers. Binds only one seryl-tRNA(Sec) per dimer. The cofactor is pyridoxal 5'-phosphate.

The protein resides in the cytoplasm. It catalyses the reaction L-seryl-tRNA(Sec) + selenophosphate + H(+) = L-selenocysteinyl-tRNA(Sec) + phosphate. It functions in the pathway aminoacyl-tRNA biosynthesis; selenocysteinyl-tRNA(Sec) biosynthesis; selenocysteinyl-tRNA(Sec) from L-seryl-tRNA(Sec) (bacterial route): step 1/1. In terms of biological role, converts seryl-tRNA(Sec) to selenocysteinyl-tRNA(Sec) required for selenoprotein biosynthesis. In Escherichia coli O139:H28 (strain E24377A / ETEC), this protein is L-seryl-tRNA(Sec) selenium transferase.